Here is a 229-residue protein sequence, read N- to C-terminus: UPF0758 protein MA_1979 (229 aa).

The MPN domain maps to 106–228; sequence KICSPKDVYA…YVSLKDEGFV (123 aa). 3 residues coordinate Zn(2+): histidine 177, histidine 179, and aspartate 190. Residues 177–190 carry the JAMM motif motif; that stretch reads HNHPSGDPSPSRED.

Belongs to the UPF0758 family.

This Methanosarcina acetivorans (strain ATCC 35395 / DSM 2834 / JCM 12185 / C2A) protein is UPF0758 protein MA_1979.